Consider the following 149-residue polypeptide: Probable flagellum biosynthesis repressor protein FlbT (149 aa).

Belongs to the FlbT family.

In terms of biological role, has a post-transcriptional repressor function in flagellum biogenesis. Associates with the 5'-UTR of fljK mRNA and promotes its degradation. The sequence is that of Probable flagellum biosynthesis repressor protein FlbT from Rhizobium etli (strain ATCC 51251 / DSM 11541 / JCM 21823 / NBRC 15573 / CFN 42).